A 217-amino-acid chain; its full sequence is ATP synthase subunit a (217 aa).

A run of 6 helical transmembrane segments spans residues 5–25 (EHVITSIVAMVVALGVVLAAG), 63–83 (LIASIGLFVFFGNVMELLPFV), 89–109 (NINTTLALTLIVFFLYHFEGF), 120–140 (FMGPIKALAPFFFIIEIMSHL), 157–177 (GAILLISIIGVLIGNPFTLAV), and 191–213 (LAIVLQAFIFMILSTIYIAGAVV).

The protein belongs to the ATPase A chain family. F-type ATPases have 2 components, CF(1) - the catalytic core - and CF(0) - the membrane proton channel. CF(1) has five subunits: alpha(3), beta(3), gamma(1), delta(1), epsilon(1). CF(0) has three main subunits: a(1), b(2) and c(9-12). The alpha and beta chains form an alternating ring which encloses part of the gamma chain. CF(1) is attached to CF(0) by a central stalk formed by the gamma and epsilon chains, while a peripheral stalk is formed by the delta and b chains.

The protein localises to the cell inner membrane. In terms of biological role, key component of the proton channel; it plays a direct role in the translocation of protons across the membrane. The protein is ATP synthase subunit a of Hydrogenobaculum sp. (strain Y04AAS1).